The chain runs to 218 residues: Capsid protein (218 aa).

At Met-1 the chain carries N-acetylmethionine; by host. Residues Met-1–Ala-28 are disordered. Basic residues predominate over residues Arg-11–Ser-21.

The protein belongs to the cucumovirus capsid protein family.

It is found in the virion. Capsid protein. Probably binds RNA and plays a role in packaging. The protein is Capsid protein of Cucumis sativus (Cucumber).